A 1036-amino-acid polypeptide reads, in one-letter code: MASSPPKKTLNSQSSSLSRPPQAVKFGRRTSSGRIVSLSRDDDMDVSGDYSGQNDYINYTVLMPPTPDNQPAGSSGSTSESKGDANRGGGGGDGPKMGNKLERRLSVMKSNNKSMLLRSQTGDFDHNRWLFESKGKYGIGNAFWSEEDDTYDGGVSKSDFLDKPWKPLTRKVQIPAKILSPYRLLIVIRLVIVFFFLWWRITNPNEDAMWLWGLSIVCEIWFAFSWILDILPKLNPINRATDLAALHDKFEQPSPSNPTGRSDLPGVDVFVSTADPEKEPPLVTANTLLSILAVDYPIEKLSAYISDDGGAILTFEAMAEAVRFAEYWVPFCRKHDIEPRNPDSYFSIKKDPTKNKKRQDFVKDRRWIKREYDEFKVRINGLPEQIKKRAEQFNMREELKEKRIAREKNGGVLPPDGVEVVKATWMADGTHWPGTWFEPKPDHSKGDHAGILQIMSKVPDLEPVMGGPNEGALDFTGIDIRVPMFAYVSREKRPGFDHNKKAGAMNGMVRASAILSNGAFILNLDCDHYIYNSKAIKEGMCFMMDRGGDRICYIQFPQRFEGIDPSDRYANHNTVFFDGNMRALDGLQGPVYVGTGCMFRRYALYGFNPPRANEYSGVFGQEKAPAMHVRTQSQASQTSQASDLESDTQPLNDDPDLGLPKKFGNSTMFTDTIPVAEYQGRPLADHMSVKNGRPPGALLLPRPPLDAPTVAEAIAVISCWYEDNTEWGDRIGWIYGSVTEDVVTGYRMHNRGWRSVYCITKRDAFRGTAPINLTDRLHQVLRWATGSVEIFFSKNNAMFATRRLKFLQRVAYLNVGIYPFTSIFLVVYCFLPALCLFSGKFIVQSLDIHFLSYLLCITVTLTLISLLEVKWSGIGLEEWWRNEQFWLIGGTSAHLAAVVQGLLKVIAGIEISFTLTSKASGEDEDDIFADLYIVKWTGLFIMPLTIIIVNLVAIVIGASRTIYSVIPQWGKLMGGIFFSLWVLTHMYPFAKGLMGRRGKVPTIVYVWSGLVSITVSLLWITISPPDDVSGSGGISV.

The tract at residues 1-99 (MASSPPKKTL…GGGDGPKMGN (99 aa)) is disordered. 2 stretches are compositionally biased toward polar residues: residues 9 to 19 (TLNSQSSSLSR) and 69 to 80 (NQPAGSSGSTSE). Residues 86 to 95 (NRGGGGGDGP) show a composition bias toward gly residues. A run of 2 helical transmembrane segments spans residues 178 to 198 (ILSP…FFLW) and 208 to 228 (AMWL…SWIL). Residue D308 is part of the active site. Residues 626–665 (AMHVRTQSQASQTSQASDLESDTQPLNDDPDLGLPKKFGN) form a disordered region. Over residues 631 to 642 (TQSQASQTSQAS) the composition is skewed to low complexity. Residue D741 is part of the active site. A run of 6 helical transmembrane segments spans residues 817-837 (IYPF…LCLF), 848-868 (IHFL…SLLE), 895-915 (LAAV…SFTL), 938-958 (GLFI…VIGA), 962-982 (IYSV…SLWV), and 1002-1022 (TIVY…WITI).

The protein belongs to the glycosyltransferase 2 family. Plant cellulose synthase-like D subfamily.

The protein localises to the golgi apparatus membrane. Thought to be a Golgi-localized beta-glycan synthase that polymerize the backbones of noncellulosic polysaccharides (hemicelluloses) of plant cell wall. The protein is Cellulose synthase-like protein D1 (CSLD1) of Arabidopsis thaliana (Mouse-ear cress).